Here is a 107-residue protein sequence, read N- to C-terminus: SOSS complex subunit C (107 aa).

This sequence belongs to the SOSS-C family. In terms of assembly, belongs to the multiprotein complex Integrator. Component of the SOSS complex, composed of soss-b (soss-b1/nabp2 or soss-b2/nabp1), soss-a/ints3 and soss-c/inip.

It is found in the nucleus. Functionally, component of the SOSS complex, a multiprotein complex that functions downstream of the MRN complex to promote DNA repair and G2/M checkpoint. The SOSS complex associates with single-stranded DNA at DNA lesions and influences diverse endpoints in the cellular DNA damage response including cell-cycle checkpoint activation, recombinational repair and maintenance of genomic stability. Required for efficient homologous recombination-dependent repair of double-strand breaks (DSBs). The polypeptide is SOSS complex subunit C (inip) (Salmo salar (Atlantic salmon)).